The primary structure comprises 182 residues: Troponin I, fast skeletal muscle (182 aa).

Gly-2 is modified (N-acetylglycine). An involved in binding TNC region spans residues 2 to 48 (GDEEKRNRAITARRQHLKSVMLQIAATELEKEEGRREAEKQNYLAEH). Position 12 is a phosphothreonine; by PHK (Thr-12). The tract at residues 97-117 (NQKLFDLRGKFKRPPLRRVRM) is involved in binding TNC and actin. Position 118 is a phosphoserine; by PKA (Ser-118).

It belongs to the troponin I family. In terms of assembly, binds to actin and tropomyosin.

Its function is as follows. Troponin I is the inhibitory subunit of troponin, the thin filament regulatory complex which confers calcium-sensitivity to striated muscle actomyosin ATPase activity. This chain is Troponin I, fast skeletal muscle (TNNI2), found in Oryctolagus cuniculus (Rabbit).